A 178-amino-acid polypeptide reads, in one-letter code: Actin-related protein 2/3 complex subunit 3-B (178 aa).

It belongs to the ARPC3 family. In terms of assembly, component of the Arp2/3 complex composed of actr2/arp2, actr3/arp3, arpc1 (arpc1a or arpc1b), arpc2, arpc3, arpc4 and arpc5.

It localises to the cytoplasm. The protein resides in the cytoskeleton. It is found in the cell projection. Its subcellular location is the nucleus. Component of the Arp2/3 complex, a multiprotein complex that mediates actin polymerization upon stimulation by nucleation-promoting factor (NPF). The Arp2/3 complex mediates the formation of branched actin networks in the cytoplasm, providing the force for cell motility. In addition to its role in the cytoplasmic cytoskeleton, the Arp2/3 complex also promotes actin polymerization in the nucleus, thereby regulating gene transcription and repair of damaged DNA. The Arp2/3 complex promotes homologous recombination (HR) repair in response to DNA damage by promoting nuclear actin polymerization, leading to drive motility of double-strand breaks (DSBs). This chain is Actin-related protein 2/3 complex subunit 3-B (arpc3-b), found in Xenopus laevis (African clawed frog).